The chain runs to 274 residues: Syntaxin-12 (274 aa).

Residues 1 to 20 (MSYGPLDMYRNPGPSGPQPR) are disordered. Residue serine 2 is modified to N-acetylserine. Topologically, residues 2–250 (SYGPLDMYRN…AYYQKKSRKK (249 aa)) are cytoplasmic. The stretch at 34–80 (QRISQATAQIKNLMSQLGTKQDSSKLQENLQQFQHSTNQLAKETNEL) forms a coiled coil. The disordered stretch occupies residues 128–150 (EKESIARARAGSRLSAEDRQREE). Residues serine 139, serine 142, serine 218, and serine 225 each carry the phosphoserine modification. A t-SNARE coiled-coil homology domain is found at 178–240 (LELIKERETA…ERASDQLQRA (63 aa)). Residues 251–271 (MCILVLVLSVIVTVLVVVIWV) traverse the membrane as a helical; Anchor for type IV membrane protein segment. The Vesicular segment spans residues 272 to 274 (ASK).

This sequence belongs to the syntaxin family. In terms of assembly, associates with the BLOC-1 complex. Interacts with BLOC1S6. Interacts with NAPA and SNAP23. Identified in a complex containing STX6, STX12, VAMP4 and VTI1A. Interacts with GRIPAP1. Forms a complex with GRIP1, GRIA2 and NSG1; controls the intracellular fate of AMPAR and the endosomal sorting of the GRIA2 subunit toward recycling and membrane targeting. Interacts with NSG1. Interacts with TPC1. Interacts (via N-terminus) with VPS13B. In terms of tissue distribution, ubiquitous. Highly expressed in brain.

Its subcellular location is the endosome membrane. It localises to the golgi apparatus membrane. The protein resides in the endomembrane system. It is found in the early endosome membrane. The protein localises to the recycling endosome membrane. Functionally, SNARE promoting fusion of transport vesicles with target membranes. Together with SNARE STX6, promotes movement of vesicles from endosomes to the cell membrane, and may therefore function in the endocytic recycling pathway. Through complex formation with GRIP1, GRIA2 and NSG1 controls the intracellular fate of AMPAR and the endosomal sorting of the GRIA2 subunit toward recycling and membrane targeting. In Rattus norvegicus (Rat), this protein is Syntaxin-12 (Stx12).